Consider the following 355-residue polypeptide: 3-dehydroquinate synthase (355 aa).

NAD(+) contacts are provided by residues E71–K76, G105–D109, T129–S130, K142, and K151. Residues E184, H246, and H263 each contribute to the Zn(2+) site.

It belongs to the sugar phosphate cyclases superfamily. Dehydroquinate synthase family. Requires Co(2+) as cofactor. Zn(2+) is required as a cofactor. It depends on NAD(+) as a cofactor.

The protein resides in the cytoplasm. The enzyme catalyses 7-phospho-2-dehydro-3-deoxy-D-arabino-heptonate = 3-dehydroquinate + phosphate. The protein operates within metabolic intermediate biosynthesis; chorismate biosynthesis; chorismate from D-erythrose 4-phosphate and phosphoenolpyruvate: step 2/7. In terms of biological role, catalyzes the conversion of 3-deoxy-D-arabino-heptulosonate 7-phosphate (DAHP) to dehydroquinate (DHQ). The protein is 3-dehydroquinate synthase of Streptococcus pneumoniae (strain 70585).